The sequence spans 521 residues: Maturase K (521 aa).

It belongs to the intron maturase 2 family. MatK subfamily.

It is found in the plastid. It localises to the chloroplast. Its function is as follows. Usually encoded in the trnK tRNA gene intron. Probably assists in splicing its own and other chloroplast group II introns. The polypeptide is Maturase K (Anthericum liliago (St-Bernard's lily)).